A 144-amino-acid polypeptide reads, in one-letter code: Small ribosomal subunit protein bS6 (144 aa).

Residues 99 to 144 form a disordered region; sequence KASPLAPCEEKGEEGKAEDAADELTTFGMADDDDLGDDDDTVEAGI. Basic and acidic residues predominate over residues 106–117; that stretch reads CEEKGEEGKAED. Residues 128-144 are compositionally biased toward acidic residues; it reads ADDDDLGDDDDTVEAGI.

This sequence belongs to the bacterial ribosomal protein bS6 family.

Functionally, binds together with bS18 to 16S ribosomal RNA. The polypeptide is Small ribosomal subunit protein bS6 (Magnetococcus marinus (strain ATCC BAA-1437 / JCM 17883 / MC-1)).